A 98-amino-acid polypeptide reads, in one-letter code: MSRRCELTGKAVLTGNLVSHSNRKTRTRFLPNLCNVTLISDTLQRRIHFRVAAATLRSVEHRGGLDAFLVKAADAQLSPGALSVKREIVKKQAAAAAQ.

Belongs to the bacterial ribosomal protein bL28 family.

In Beijerinckia indica subsp. indica (strain ATCC 9039 / DSM 1715 / NCIMB 8712), this protein is Large ribosomal subunit protein bL28.